The chain runs to 270 residues: Homeobox protein vent1B (270 aa).

Composition is skewed to basic and acidic residues over residues 17 to 26 and 44 to 59; these read EEAADGKDSM and YAKEMPRRKDGQDVQE. Disordered stretches follow at residues 17 to 66 and 88 to 134; these read EEAA…SFQC and TWGS…LRTA. A compositionally biased stretch (polar residues) spans 89–99; the sequence is WGSSDEFSSAG. A compositionally biased stretch (basic and acidic residues) spans 116 to 131; sequence QDTDHNGKSTKSDRRL. The homeobox DNA-binding region spans 128–187; sequence DRRLRTAFSPQQISKLEQAFNKQRYLGASERKKLATSLMLSEIQVKTWFQNRRMKLKRQI.

Expressed in the ventral marginal zone of gastrulae. At the end of gastrulation, predominantly localized to the ventral region of the closing slit blastopore. At early tail bud stage, expression is maintained only in the forming proctodeum.

The protein localises to the nucleus. In terms of biological role, probable transcription regulator. Acts in a ventral signaling pathway downstream of bmp4 and vent2B. This chain is Homeobox protein vent1B (vent1B), found in Xenopus laevis (African clawed frog).